Here is a 303-residue protein sequence, read N- to C-terminus: Phytochrome-associated serine/threonine-protein phosphatase (303 aa).

Positions 50, 52, 78, and 110 each coordinate Zn(2+). Catalysis depends on histidine 111, which acts as the Proton donor. Zn(2+)-binding residues include histidine 160 and histidine 234.

The protein belongs to the PPP phosphatase family. PP-6 (PP-V) subfamily. In terms of assembly, interacts with PHYA and PHYB, mostly when they are phosphorylated and in Pfr forms. It depends on Zn(2+) as a cofactor. Mostly expressed in flowers and stems.

Its subcellular location is the cytoplasm. The enzyme catalyses O-phospho-L-seryl-[protein] + H2O = L-seryl-[protein] + phosphate. The catalysed reaction is O-phospho-L-threonyl-[protein] + H2O = L-threonyl-[protein] + phosphate. Its function is as follows. Catalytic subunit of protein phosphatase 6 (PP6). Dephosphorylates phosphorylated phytochromes, with a preference toward Pfr forms. Plays a major role in the photoperiodic control of flowering time in long days by modulating phytochrome signals in flowering time control. This is Phytochrome-associated serine/threonine-protein phosphatase from Pisum sativum (Garden pea).